We begin with the raw amino-acid sequence, 292 residues long: Elongation factor Ts (292 aa).

The involved in Mg(2+) ion dislocation from EF-Tu stretch occupies residues 80–83; the sequence is TDFV.

The protein belongs to the EF-Ts family.

It is found in the cytoplasm. In terms of biological role, associates with the EF-Tu.GDP complex and induces the exchange of GDP to GTP. It remains bound to the aminoacyl-tRNA.EF-Tu.GTP complex up to the GTP hydrolysis stage on the ribosome. The polypeptide is Elongation factor Ts (Cupriavidus necator (strain ATCC 17699 / DSM 428 / KCTC 22496 / NCIMB 10442 / H16 / Stanier 337) (Ralstonia eutropha)).